Reading from the N-terminus, the 457-residue chain is MQKYISEARLLLALAIPVILAQIAQTAMGFVDTVMAGGYSATDMAAVAIGTSIWLPAILFGHGLLLALTPVIAQLNGSGRRERIAHQVRQGFWLAGFVSVLIMLVLWNAGYIIRSMENIDPALADKAVGYLRALLWGAPGYLFFQVARNQCEGLAKTKPGMVMGFIGLLVNIPVNYIFIYGHFGMPELGGVGCGVATAAVYWVMFLAMVSYIKRARSMRDIRNEKGTAKPDPAVMKRLIQLGLPIALALFFEVTLFAVVALLVSPLGIVDVAGHQIALNFSSLMFVLPMSLAAAVTIRVGYRLGQGSTLDAQTAARTGLMVGVCMATLTAIFTVSLREQIALLYNDNPEVVTLAAHLMLLAAVYQISDSIQVIGSGILRGYKDTRSIFYITFTAYWVLGLPSGYILALTDLVVEPMGPAGFWIGFIIGLTSAAIMMMLRMRFLQRLPSAIILQRASR.

The next 12 membrane-spanning stretches (helical) occupy residues 11-31, 53-73, 93-113, 127-147, 160-180, 189-209, 243-263, 276-296, 314-334, 350-370, 387-407, and 418-438; these read LLALAIPVILAQIAQTAMGFV, IWLPAILFGHGLLLALTPVIA, WLAGFVSVLIMLVLWNAGYII, AVGYLRALLWGAPGYLFFQVA, GMVMGFIGLLVNIPVNYIFIY, GGVGCGVATAAVYWVMFLAMV, LPIALALFFEVTLFAVVALLV, IALNFSSLMFVLPMSLAAAVT, AARTGLMVGVCMATLTAIFTV, VVTLAAHLMLLAAVYQISDSI, IFYITFTAYWVLGLPSGYILA, and PAGFWIGFIIGLTSAAIMMML.

The protein belongs to the multi antimicrobial extrusion (MATE) (TC 2.A.66.1) family. MdtK subfamily.

It is found in the cell inner membrane. Its function is as follows. Multidrug efflux pump that functions probably as a Na(+)/drug antiporter. The protein is Multidrug resistance protein MdtK of Escherichia coli O127:H6 (strain E2348/69 / EPEC).